The chain runs to 446 residues: 4-aminobutyrate aminotransferase (446 aa).

Lys-291 is modified (N6-(pyridoxal phosphate)lysine).

Belongs to the class-III pyridoxal-phosphate-dependent aminotransferase family. It depends on pyridoxal 5'-phosphate as a cofactor.

It carries out the reaction 4-aminobutanoate + 2-oxoglutarate = succinate semialdehyde + L-glutamate. The enzyme catalyses (S)-3-amino-2-methylpropanoate + 2-oxoglutarate = 2-methyl-3-oxopropanoate + L-glutamate. The protein operates within amino-acid degradation; 4-aminobutanoate degradation. The protein is 4-aminobutyrate aminotransferase (gabT) of Mycobacterium leprae (strain TN).